Consider the following 171-residue polypeptide: UPF0312 protein SE_0264 (171 aa).

The protein belongs to the UPF0312 family.

The protein is UPF0312 protein SE_0264 of Staphylococcus epidermidis (strain ATCC 12228 / FDA PCI 1200).